The following is a 460-amino-acid chain: UDP-N-acetylmuramate--L-alanine ligase (460 aa).

118–124 (GAHGKTT) lines the ATP pocket.

Belongs to the MurCDEF family.

The protein resides in the cytoplasm. The catalysed reaction is UDP-N-acetyl-alpha-D-muramate + L-alanine + ATP = UDP-N-acetyl-alpha-D-muramoyl-L-alanine + ADP + phosphate + H(+). It participates in cell wall biogenesis; peptidoglycan biosynthesis. Its function is as follows. Cell wall formation. In Clostridium botulinum (strain Alaska E43 / Type E3), this protein is UDP-N-acetylmuramate--L-alanine ligase.